A 246-amino-acid polypeptide reads, in one-letter code: UDP-N-acetyl-D-mannosaminuronic acid transferase (246 aa).

It belongs to the glycosyltransferase 26 family.

It catalyses the reaction UDP-N-acetyl-alpha-D-mannosaminouronate + N-acetyl-alpha-D-glucosaminyl-di-trans,octa-cis-undecaprenyl diphosphate = beta-D-ManNAcA-(1-&gt;4)-alpha-D-GlcNAc-di-trans,octa-cis-undecaprenyl diphosphate + UDP + H(+). The protein operates within bacterial outer membrane biogenesis; enterobacterial common antigen biosynthesis. Catalyzes the synthesis of Und-PP-GlcNAc-ManNAcA (Lipid II), the second lipid-linked intermediate involved in enterobacterial common antigen (ECA) synthesis. This chain is UDP-N-acetyl-D-mannosaminuronic acid transferase, found in Escherichia coli (strain ATCC 8739 / DSM 1576 / NBRC 3972 / NCIMB 8545 / WDCM 00012 / Crooks).